The primary structure comprises 319 residues: 3'-5' exoribonuclease YhaM (319 aa).

The OB DNA-binding region spans 12–90; the sequence is EAVDGYLLIK…QLKIASIRPT (79 aa). One can recognise an HD domain in the interval 163 to 279; sequence HVVSMLRIGK…LHLIDNIDAK (117 aa).

This sequence belongs to the YhaM family.

In terms of biological role, shows a 3'-5' exoribonuclease activity. The chain is 3'-5' exoribonuclease YhaM from Shouchella clausii (strain KSM-K16) (Alkalihalobacillus clausii).